Reading from the N-terminus, the 128-residue chain is MRHRKSGRQLNRNSSHRQAMFRNMAGSLVRHEIIKTTLPKAKELRRVVEPLITLAKTDSVANRRLAFARTRDNEIVAKLFNELGPRFASRAGGYTRILKCGFRAGDNAPMAYIELVDRSASEAEAAAE.

This sequence belongs to the bacterial ribosomal protein bL17 family. In terms of assembly, part of the 50S ribosomal subunit. Contacts protein L32.

In Edwardsiella ictaluri (strain 93-146), this protein is Large ribosomal subunit protein bL17.